A 639-amino-acid polypeptide reads, in one-letter code: Extracellular metalloproteinase NpIII (639 aa).

Positions 1–16 (MHMLLFIGALALPVFV) are cleaved as a signal peptide. The propeptide occupies 17 to 245 (CTQSCEPASL…IHGVVDYVSE (229 aa)). 4 N-linked (GlcNAc...) asparagine glycosylation sites follow: N287, N320, N336, and N368. H429 lines the Zn(2+) pocket. The active site involves E430. Residue H433 coordinates Zn(2+). The N-linked (GlcNAc...) asparagine glycan is linked to N509.

Belongs to the peptidase M36 family. Zn(2+) is required as a cofactor.

The protein localises to the secreted. Secreted metalloproteinase that allows assimilation of proteinaceous substrates. The protein is Extracellular metalloproteinase NpIII (NpIII) of Aspergillus oryzae (strain ATCC 42149 / RIB 40) (Yellow koji mold).